We begin with the raw amino-acid sequence, 474 residues long: Membrane-bound acylglycerophosphatidylinositol O-acyltransferase mboat7 (474 aa).

Over 1–5 the chain is Cytoplasmic; the sequence is MSPNE. Residues 6–22 form a helical membrane-spanning segment; sequence LTYLAILLGSAPLGFLF. Topologically, residues 23–33 are lumenal; the sequence is KNGSPQVKQRG. A helical membrane pass occupies residues 34-57; sequence SAAVGVALTLITCHIHSLHSAITI. Residues 58–73 are Cytoplasmic-facing; sequence LGTWLIIKILPRSCHF. The helical transmembrane segment at 74–93 threads the bilayer; the sequence is PTLGWTFTYLLFFRTITYFD. Over 94–193 the chain is Lumenal; that stretch reads IPAPTPFTNA…IPSWKPLVSR (100 aa). The chain crosses the membrane as a helical span at residues 194 to 211; that stretch reads LKPAPVFGVLFLIASQYF. At 212-230 the chain is on the cytoplasmic side; the sequence is PLDYVKTDEFYEQAFLYRL. The chain crosses the membrane as a helical span at residues 231-260; the sequence is FYMVPTFFIFRMRFYVAWIFAECGCISAAF. The Lumenal segment spans residues 261–427; sequence GAYPVSAKSR…LTFTDTYRYW (167 aa). The N-linked (GlcNAc...) asparagine glycan is linked to Asn322. A helical transmembrane segment spans residues 428-448; it reads QSIYFSVHVLAISLFLLGRVL. Topologically, residues 449-473 are cytoplasmic; it reads ALKSPRRPRNTKEEKAEAKQENRLQ.

It belongs to the membrane-bound acyltransferase family.

It is found in the endoplasmic reticulum membrane. The enzyme catalyses a 1-acyl-sn-glycero-3-phospho-(1D-myo-inositol) + (5Z,8Z,11Z,14Z)-eicosatetraenoyl-CoA = a 1-acyl-2-(5Z,8Z,11Z,14Z-eicosatetraenoyl)-sn-glycero-3-phospho-(1D-myo-inositol) + CoA. It carries out the reaction (5Z,8Z,11Z,14Z)-eicosatetraenoyl-CoA + 1-hexadecanoyl-sn-glycero-3-phosphocholine = 1-hexadecanoyl-2-(5Z,8Z,11Z,14Z-eicosatetraenoyl)-sn-glycero-3-phosphocholine + CoA. The catalysed reaction is a 1-acyl-sn-glycero-3-phospho-(1D-myo-inositol) + an acyl-CoA = a 1,2-diacyl-sn-glycero-3-phospho-(1D-myo-inositol) + CoA. It catalyses the reaction 1-octadecanoyl-sn-glycero-3-phospho-(1D-myo-inositol) + (5Z,8Z,11Z,14Z)-eicosatetraenoyl-CoA = 1-octadecanoyl-2-(5Z,8Z,11Z,14Z-eicosatetraenoyl)-sn-glycero-3-phospho-(1D-myo-inositol) + CoA. It functions in the pathway lipid metabolism; phospholipid metabolism. Functionally, acyltransferase which catalyzes the transfer of an acyl group from an acyl-CoA to a lysophosphatidylinositol (1-acylglycerophosphatidylinositol or LPI) leading to the production of a phosphatidylinositol (1,2-diacyl-sn-glycero-3-phosphoinositol or PI) and participates in the reacylation step of the phospholipid remodeling pathway also known as the Lands cycle. Prefers arachidonoyl-CoA as the acyl donor, thus contributing to the regulation of free levels arachidonic acid in cell. The sequence is that of Membrane-bound acylglycerophosphatidylinositol O-acyltransferase mboat7 (mboat7) from Xenopus laevis (African clawed frog).